Consider the following 410-residue polypeptide: Scarecrow-like protein 32 (410 aa).

In terms of domain architecture, GRAS spans 18–408; that stretch reads LRGCGDANFM…HSVVFATVWV (391 aa). The leucine repeat I (LRI) stretch occupies residues 25-88; that stretch reads NFMEQLLLHC…AVSKTPTLSS (64 aa). The segment at 107–188 is VHIID; sequence LAAFVDLTPW…HFPPFINISY (82 aa). The short motif at 138 to 142 is the VHIID element; sequence VHIVD. The tract at residues 190–227 is leucine repeat II (LRII); sequence ELGSKLVNFATTRNITMEFTIVPSTYSDGFSSLLQQLR. Residues 237–329 are PFYRE; that stretch reads LVVNCHMMLR…EAEISWKIEN (93 aa). The segment at 332–408 is SAW; that stretch reads AKEGAERVER…HSVVFATVWV (77 aa).

This sequence belongs to the GRAS family. In terms of tissue distribution, expressed in seedlings, leaves and flowers.

The protein resides in the nucleus. In terms of biological role, probable transcription factor involved in plant development. The chain is Scarecrow-like protein 32 (SCL32) from Arabidopsis thaliana (Mouse-ear cress).